A 679-amino-acid chain; its full sequence is Methionine--tRNA ligase (679 aa).

Residues 14–24 carry the 'HIGH' region motif; that stretch reads PYANGSIHLGH. Zn(2+)-binding residues include Cys145, Cys148, Cys158, and Cys161. Residues 331-335 carry the 'KMSKS' region motif; it reads KMSKS. Position 334 (Lys334) interacts with ATP. Positions 577 to 679 constitute a tRNA-binding domain; sequence TFAAVDLRVA…SGAKPGQRIK (103 aa).

This sequence belongs to the class-I aminoacyl-tRNA synthetase family. MetG type 1 subfamily. Homodimer. Requires Zn(2+) as cofactor.

It is found in the cytoplasm. The catalysed reaction is tRNA(Met) + L-methionine + ATP = L-methionyl-tRNA(Met) + AMP + diphosphate. Functionally, is required not only for elongation of protein synthesis but also for the initiation of all mRNA translation through initiator tRNA(fMet) aminoacylation. In Pseudomonas entomophila (strain L48), this protein is Methionine--tRNA ligase.